A 968-amino-acid polypeptide reads, in one-letter code: MPFTLGQRWISDTESELGLGTVVAIDVRMITLLFPATGENRLYARNDSPITRVMFNPSDTITHHEGWQLKVEEVTQENGLITYIGTRLDTEETGVAMREVLLDSKLTFSKPQDRLFAGQIDRMDRFALRFRARKYQSEQFRLPWSGLRGIRASLIPHQLHIAYEVGQRHAPRVLLADEVGLGKTIEAGMIIHQQLLAGRAERVLIVVPESLQHQWLVEMLRRFNLRFSLFDDSRYSEALLDSSNPFDTEQMVICSLDFVRRNKQRLEQLADASWDLLVVDEAHHLAWSEEAPSREYQVIEQLAEHIPGVLLLTATPEQLGQQSHFARLRLLDPDRFHDYEEFVNEQQKYRPIADAVTLLLGGERLTDDKLNLLGELIDEQDIEPLLKAANSQSEDSEAARQELVTMLMDRHGTSRVLFRNTRNGVKGFPHRVLHQIKLPLPTQYQTAIKVSGIMGAKKTLDARAKDMLYPEQIYQEFEGENATWWNFDPRVEWLLNYLVANRGEKVLVICAQAATALQLEQVLREREAIRAAVFHEGLSLIERDRAAAYFASEEDGAQVLLCSEIGSEGRNFQFACQLVMFDLPFNPDLLEQRIGRLDRIGQNREIQIMVPYLEDTAQAILVRWYHEGLDAFEHTCPTGRTIYDSSYQELISYLATPSEQEGLDEFIHTCRQQHEGLKLQLEQGRDRLLEMHSNGGEHGQELAQSIAEQDNDINLVSFALNLFDIVGINQEDRSDNLIVLTPSDHMLVPDFPGLPPDGCTVTFDREQALSREDAQFVSWEHPIIRNGLDLILSGDTGSCAVSLLKNKALPVGTLLAELVYVVEAQAPKHLQLTRFLPPTPVRMLMDRNGTNLAAQVEFESFNRQLNAVNRHTSSKLVNAVQQEVHTMLQQAEALVEAQAQALIETAKREADDKLSTELARLEALKAVNPNIRDDEIEALEHNRKMVLENLNQAGWRLDAIRLVVVTHQ.

The 171-residue stretch at 164–334 (EVGQRHAPRV…FARLRLLDPD (171 aa)) folds into the Helicase ATP-binding domain. Position 177–184 (177–184 (DEVGLGKT)) interacts with ATP. Positions 280-283 (DEAH) match the DEAH box motif. Positions 490–644 (RVEWLLNYLV…TCPTGRTIYD (155 aa)) constitute a Helicase C-terminal domain.

The protein belongs to the SNF2/RAD54 helicase family. RapA subfamily. In terms of assembly, interacts with the RNAP. Has a higher affinity for the core RNAP than for the holoenzyme. Its ATPase activity is stimulated by binding to RNAP.

In terms of biological role, transcription regulator that activates transcription by stimulating RNA polymerase (RNAP) recycling in case of stress conditions such as supercoiled DNA or high salt concentrations. Probably acts by releasing the RNAP, when it is trapped or immobilized on tightly supercoiled DNA. Does not activate transcription on linear DNA. Probably not involved in DNA repair. This is RNA polymerase-associated protein RapA from Yersinia pseudotuberculosis serotype O:1b (strain IP 31758).